We begin with the raw amino-acid sequence, 242 residues long: 3-deoxy-manno-octulosonate cytidylyltransferase (242 aa).

It belongs to the KdsB family.

It localises to the cytoplasm. The enzyme catalyses 3-deoxy-alpha-D-manno-oct-2-ulosonate + CTP = CMP-3-deoxy-beta-D-manno-octulosonate + diphosphate. It functions in the pathway nucleotide-sugar biosynthesis; CMP-3-deoxy-D-manno-octulosonate biosynthesis; CMP-3-deoxy-D-manno-octulosonate from 3-deoxy-D-manno-octulosonate and CTP: step 1/1. Its pathway is bacterial outer membrane biogenesis; lipopolysaccharide biosynthesis. Its function is as follows. Activates KDO (a required 8-carbon sugar) for incorporation into bacterial lipopolysaccharide in Gram-negative bacteria. In Anaeromyxobacter sp. (strain K), this protein is 3-deoxy-manno-octulosonate cytidylyltransferase.